The sequence spans 264 residues: Stress response regulator protein 1 (264 aa).

The disordered stretch occupies residues 50–74; sequence IYSDCDNNKNNNDDDDDDDDYNKDT. Over residues 62 to 74 the composition is skewed to acidic residues; sequence DDDDDDDDYNKDT. One can recognise a Response regulatory domain in the interval 138–256; sequence RFLIVDDNII…LDLIGGSIDD (119 aa). D189 bears the 4-aspartylphosphate mark.

Its function is as follows. Required for stress adaptation, morphogenesis and virulence. This is Stress response regulator protein 1 (SRR1) from Candida tropicalis (strain ATCC MYA-3404 / T1) (Yeast).